The primary structure comprises 135 residues: Kappa-casein (135 aa).

O-linked (GalNAc...) threonine glycosylation is present at T96. The residue at position 114 (S114) is a Phosphoserine; alternate. The O-linked (GalNAc...) serine; alternate glycan is linked to S114. A glycan (O-linked (GalNAc...) threonine) is linked at T131. Residue S132 is modified to Phosphoserine.

The protein belongs to the kappa-casein family. Mammary gland specific. Secreted in milk.

The protein localises to the secreted. In terms of biological role, kappa-casein stabilizes micelle formation, preventing casein precipitation in milk. This is Kappa-casein (CSN3) from Equus grevyi (Grevy's zebra).